A 193-amino-acid polypeptide reads, in one-letter code: Imidazoleglycerol-phosphate dehydratase (193 aa).

It belongs to the imidazoleglycerol-phosphate dehydratase family.

The protein resides in the cytoplasm. The enzyme catalyses D-erythro-1-(imidazol-4-yl)glycerol 3-phosphate = 3-(imidazol-4-yl)-2-oxopropyl phosphate + H2O. It functions in the pathway amino-acid biosynthesis; L-histidine biosynthesis; L-histidine from 5-phospho-alpha-D-ribose 1-diphosphate: step 6/9. This is Imidazoleglycerol-phosphate dehydratase from Saccharolobus islandicus (strain M.16.27) (Sulfolobus islandicus).